Consider the following 133-residue polypeptide: Small ribosomal subunit protein eS8 (133 aa).

Residues 1-22 (MGFYQGPDNRKITGGLKGKHRD) form a disordered region.

This sequence belongs to the eukaryotic ribosomal protein eS8 family. Part of the 30S ribosomal subunit.

This chain is Small ribosomal subunit protein eS8, found in Saccharolobus islandicus (strain Y.N.15.51 / Yellowstone #2) (Sulfolobus islandicus).